Reading from the N-terminus, the 306-residue chain is Pyridoxal 5'-phosphate synthase subunit PdxS (306 aa).

Asp-36 is a binding site for D-ribose 5-phosphate. Lys-93 (schiff-base intermediate with D-ribose 5-phosphate) is an active-site residue. Gly-165 serves as a coordination point for D-ribose 5-phosphate. Arg-177 lines the D-glyceraldehyde 3-phosphate pocket. D-ribose 5-phosphate is bound by residues Gly-226 and 247-248 (GS).

This sequence belongs to the PdxS/SNZ family. In terms of assembly, in the presence of PdxT, forms a dodecamer of heterodimers.

The enzyme catalyses aldehydo-D-ribose 5-phosphate + D-glyceraldehyde 3-phosphate + L-glutamine = pyridoxal 5'-phosphate + L-glutamate + phosphate + 3 H2O + H(+). It participates in cofactor biosynthesis; pyridoxal 5'-phosphate biosynthesis. Catalyzes the formation of pyridoxal 5'-phosphate from ribose 5-phosphate (RBP), glyceraldehyde 3-phosphate (G3P) and ammonia. The ammonia is provided by the PdxT subunit. Can also use ribulose 5-phosphate and dihydroxyacetone phosphate as substrates, resulting from enzyme-catalyzed isomerization of RBP and G3P, respectively. The polypeptide is Pyridoxal 5'-phosphate synthase subunit PdxS (Salinispora arenicola (strain CNS-205)).